A 258-amino-acid polypeptide reads, in one-letter code: Imidazole glycerol phosphate synthase subunit HisF (258 aa).

Residues aspartate 11 and aspartate 130 contribute to the active site.

Belongs to the HisA/HisF family. Heterodimer of HisH and HisF.

Its subcellular location is the cytoplasm. The enzyme catalyses 5-[(5-phospho-1-deoxy-D-ribulos-1-ylimino)methylamino]-1-(5-phospho-beta-D-ribosyl)imidazole-4-carboxamide + L-glutamine = D-erythro-1-(imidazol-4-yl)glycerol 3-phosphate + 5-amino-1-(5-phospho-beta-D-ribosyl)imidazole-4-carboxamide + L-glutamate + H(+). Its pathway is amino-acid biosynthesis; L-histidine biosynthesis; L-histidine from 5-phospho-alpha-D-ribose 1-diphosphate: step 5/9. Its function is as follows. IGPS catalyzes the conversion of PRFAR and glutamine to IGP, AICAR and glutamate. The HisF subunit catalyzes the cyclization activity that produces IGP and AICAR from PRFAR using the ammonia provided by the HisH subunit. The sequence is that of Imidazole glycerol phosphate synthase subunit HisF from Yersinia enterocolitica serotype O:8 / biotype 1B (strain NCTC 13174 / 8081).